Reading from the N-terminus, the 216-residue chain is FMN-dependent NADH:quinone oxidoreductase (216 aa).

Residues 15-17 (SVS) and 139-142 (SRGG) each bind FMN.

Belongs to the azoreductase type 1 family. In terms of assembly, homodimer. FMN serves as cofactor.

It carries out the reaction 2 a quinone + NADH + H(+) = 2 a 1,4-benzosemiquinone + NAD(+). The catalysed reaction is N,N-dimethyl-1,4-phenylenediamine + anthranilate + 2 NAD(+) = 2-(4-dimethylaminophenyl)diazenylbenzoate + 2 NADH + 2 H(+). In terms of biological role, quinone reductase that provides resistance to thiol-specific stress caused by electrophilic quinones. Its function is as follows. Also exhibits azoreductase activity. Catalyzes the reductive cleavage of the azo bond in aromatic azo compounds to the corresponding amines. This chain is FMN-dependent NADH:quinone oxidoreductase, found in Acidovorax ebreus (strain TPSY) (Diaphorobacter sp. (strain TPSY)).